We begin with the raw amino-acid sequence, 187 residues long: Methylamine dehydrogenase light chain (187 aa).

The segment at residues 1 to 57 (MKKDTGFDSKIEKLARTTASKTGRRGFIGRLGGFLVGSALLPLLPVDRRSRLGGEVQ) is a signal peptide (tat-type signal). 6 disulfide bridges follow: cysteine 79–cysteine 144, cysteine 85–cysteine 117, cysteine 92–cysteine 177, cysteine 94–cysteine 142, cysteine 102–cysteine 133, and cysteine 134–cysteine 165. Tryptophan 113 carries the tryptophylquinone modification. A cross-link (tryptophan tryptophylquinone (Trp-Trp)) is located at residues 113-164 (WVASCYNPGDQQTYLIAYRDCCGKQTCGRCNCVNTQGELPVYRPEFNNDIVW).

It belongs to the aromatic amine dehydrogenase light chain family. In terms of assembly, heterotetramer of two light and two heavy chains. Requires tryptophan tryptophylquinone residue as cofactor. In terms of processing, predicted to be exported by the Tat system. The position of the signal peptide cleavage has not been experimentally proven. Tryptophan tryptophylquinone (TTQ) is formed by oxidation of the indole ring of a tryptophan to form tryptophylquinone followed by covalent cross-linking with another tryptophan residue.

The protein localises to the periplasm. The enzyme catalyses 2 oxidized [amicyanin] + methylamine + H2O = 2 reduced [amicyanin] + formaldehyde + NH4(+) + 2 H(+). Its pathway is one-carbon metabolism; methylamine degradation; formaldehyde from methylamine: step 1/1. Its function is as follows. Methylamine dehydrogenase carries out the oxidation of methylamine. Electrons are passed from methylamine dehydrogenase to amicyanin. In Methylophilus methylotrophus (Bacterium W3A1), this protein is Methylamine dehydrogenase light chain (mauA).